Here is a 272-residue protein sequence, read N- to C-terminus: Putative B3 domain-containing protein Os02g0455900 (272 aa).

The TF-B3 DNA-binding region spans 30–134 (GKVLMPSDVS…RFFICCRCTC (105 aa)). A disordered region spans residues 189 to 227 (TASLGCAAAQPPQVPPTPTPRRRRRSMMVHPEPPEHTTD).

The protein localises to the nucleus. The chain is Putative B3 domain-containing protein Os02g0455900 from Oryza sativa subsp. japonica (Rice).